A 379-amino-acid chain; its full sequence is Chaperone protein DnaJ (379 aa).

A J domain is found at 4–69; sequence DLYETLGVQK…QKRAAYDRYG (66 aa). The CR-type zinc-finger motif lies at 137-215; the sequence is GKTAQIRVPT…CHGQGRVVEE (79 aa). The Zn(2+) site is built by C150, C153, C167, C170, C189, C192, C203, and C206. CXXCXGXG motif repeat units follow at residues 150-157, 167-174, 189-196, and 203-210; these read CDVCTGTG, CGTCQGTG, CPTCGGRG, and CTKCHGQG.

It belongs to the DnaJ family. In terms of assembly, homodimer. Zn(2+) is required as a cofactor.

The protein localises to the cytoplasm. Its function is as follows. Participates actively in the response to hyperosmotic and heat shock by preventing the aggregation of stress-denatured proteins and by disaggregating proteins, also in an autonomous, DnaK-independent fashion. Unfolded proteins bind initially to DnaJ; upon interaction with the DnaJ-bound protein, DnaK hydrolyzes its bound ATP, resulting in the formation of a stable complex. GrpE releases ADP from DnaK; ATP binding to DnaK triggers the release of the substrate protein, thus completing the reaction cycle. Several rounds of ATP-dependent interactions between DnaJ, DnaK and GrpE are required for fully efficient folding. Also involved, together with DnaK and GrpE, in the DNA replication of plasmids through activation of initiation proteins. The sequence is that of Chaperone protein DnaJ from Rhizobium meliloti (strain 1021) (Ensifer meliloti).